Here is a 345-residue protein sequence, read N- to C-terminus: Beta-2-glycoprotein 1 (345 aa).

The first 19 residues, Met1 to Ala19, serve as a signal peptide directing secretion. 4 consecutive Sushi domains span residues Arg21–Pro81, Arg82–Pro139, Ile140–Glu202, and Val203–Ala262. 11 disulfides stabilise this stretch: Cys23-Cys66, Cys51-Cys79, Cys84-Cys124, Cys110-Cys137, Cys142-Cys188, Cys174-Cys200, Cys205-Cys248, Cys234-Cys260, Cys264-Cys315, Cys300-Cys325, and Cys307-Cys345. An O-linked (GalNAc...) threonine glycan is attached at Thr33. N-linked (GlcNAc...) asparagine glycosylation is present at Asn92. N-linked (GlcNAc...) asparagine glycosylation is found at Asn162, Asn183, and Asn193. Residue Asn253 is glycosylated (N-linked (GlcNAc...) asparagine). Residues Ser263–Cys345 form a sushi-like region.

In terms of tissue distribution, expressed by the liver and secreted in plasma.

The protein resides in the secreted. Binds to various kinds of negatively charged substances such as heparin, phospholipids, and dextran sulfate. May prevent activation of the intrinsic blood coagulation cascade by binding to phospholipids on the surface of damaged cells. The chain is Beta-2-glycoprotein 1 (APOH) from Bos taurus (Bovine).